The following is a 30-amino-acid chain: Beta/omega-theraphotoxin-Tp2a (30 aa).

3 cysteine pairs are disulfide-bonded: Cys2–Cys16, Cys9–Cys21, and Cys15–Cys25. Residues 26–30 (KKKLW) form a flexible tail region important for ability to inhibit Nav channel region. Residues 29 to 30 (LW) form a hydrophobic dyad that anchors the toxin into the membrane while positioning it over the S3 helix of Nav1.7/SCN9A region.

The protein belongs to the neurotoxin 30 (phrixotoxin) family. As to expression, expressed by the venom gland.

The protein localises to the secreted. In terms of biological role, gating-modifier toxin that targets voltage-gated sodium channels with a selective activity on Nav1.7/SCN9A (IC(50)=1-1.5 nM). It inhibits both activation and inactivation. For inhibition of activation, it is 100-fold more selective for Nav1.7/SCN9A (IC(50)=0.26-3) than for other sodium channels (Nav1.2/SCN2A (IC(50)=40-540 nM), Nav1.3/SCN3A (IC(50)=102 nM), Nav1.4/SCN4A (IC(50)=30-39 nM), Nav1.5/SCN5A (IC(50)=19-90 nM), Nav1.6/SCN8A (IC(50)=26 nM), and Nav1.8/SCN10A (IC(50)=146 nM)). For inhibition of inactivation, it is 20-fold more potent in inhibiting inactivation on Nav1.7/SCN9A (IC(50)=250 nM) than other channels (about 4.6 uM for all channels). It also weakly inhibits Cav1.2/CACNA1C and Cav3.2/CACNA1H (29% block at 1 uM). It inhibits Nav1.7/SCN9A activation by interacting with DII and impairs Nav1.7/SCN9A inactivation by interacting with DIV. It docks on top of the DII S3 helix Nav1.7/SCN9A. It is about 60-fold less active on Nav1.7/SCN9A at depolarized potential (0 mV; IC(50)=15 nM), compared to -120 mV potential (IC(50)=0.26 nM). This toxin binds to lipid membrane. This ability correlates with hNav1.7/SCN9A inhibition, showing that membrane binding is the first step in the inhibitory mechanism of this toxin. It inhibits Nav1.2/SCN2A less potently when it is coexpressed with SCN2B or SCN4B than when it is expressed alone, showing that beta subunits (SCN2B and SCN4B) have a protective effect. The protein is Beta/omega-theraphotoxin-Tp2a of Thrixopelma pruriens (Peruvian green velvet tarantula).